We begin with the raw amino-acid sequence, 291 residues long: tRNA dimethylallyltransferase (291 aa).

Residue 9-16 (GPTASGKT) participates in ATP binding. 11 to 16 (TASGKT) contacts substrate. The tract at residues 34–37 (DSLQ) is interaction with substrate tRNA.

This sequence belongs to the IPP transferase family. In terms of assembly, monomer. Mg(2+) serves as cofactor.

It catalyses the reaction adenosine(37) in tRNA + dimethylallyl diphosphate = N(6)-dimethylallyladenosine(37) in tRNA + diphosphate. Catalyzes the transfer of a dimethylallyl group onto the adenine at position 37 in tRNAs that read codons beginning with uridine, leading to the formation of N6-(dimethylallyl)adenosine (i(6)A). This is tRNA dimethylallyltransferase from Aster yellows witches'-broom phytoplasma (strain AYWB).